Consider the following 104-residue polypeptide: Ig lambda-2 chain C region (104 aa).

Residues 6–99 (PTLTVFPPSS…EGDTVEKSLS (94 aa)) enclose the Ig-like domain. Cysteine 27 and cysteine 85 are joined by a disulfide.

This chain is Ig lambda-2 chain C region (Iglc2), found in Mus musculus (Mouse).